We begin with the raw amino-acid sequence, 143 residues long: Large ribosomal subunit protein uL13 (143 aa).

The protein belongs to the universal ribosomal protein uL13 family. As to quaternary structure, part of the 50S ribosomal subunit.

This protein is one of the early assembly proteins of the 50S ribosomal subunit, although it is not seen to bind rRNA by itself. It is important during the early stages of 50S assembly. This is Large ribosomal subunit protein uL13 from Desulfitobacterium hafniense (strain DSM 10664 / DCB-2).